The following is a 334-amino-acid chain: DNA polymerase III subunit delta' (334 aa).

The DNA polymerase III holoenzyme complex contains at least 10 different subunits organized into 3 functionally essential subassemblies: the Pol III core, the beta sliding clamp processivity factor and the clamp-loading complex. The Pol III core (subunits alpha, epsilon and theta) contains the polymerase and the 3'-5' exonuclease proofreading activities. The polymerase is tethered to the template via the dimeric beta sliding clamp processivity factor. The clamp-loading complex (also called gamma complex) assembles the beta sliding clamp onto the primed template and plays a central role in the organization and communication at the replication fork. The clamp-loading complex contains delta, delta', psi and chi, and 3 copies of either or both of two different DnaX proteins, gamma and tau. The DNA replisome complex has a single clamp loader (3 tau and 1 each of delta, delta', psi and chi subunits) which binds 3 Pol III cores (1 core on the leading strand and 2 on the lagging strand) each with a beta sliding clamp dimer. Additional proteins in the replisome are other copies of gamma, psi and chi, Ssb, DNA helicase and RNA primase. The clamp loader hydrolyzes ATP to assemble the beta processivity factor onto the primed template and plays a central role in the organization and communication at the replication fork; the minimal complex to load the beta sliding clamp on DNA is delta, delta', gamma.

The catalysed reaction is DNA(n) + a 2'-deoxyribonucleoside 5'-triphosphate = DNA(n+1) + diphosphate. In terms of biological role, part of the beta sliding clamp loading complex, which hydrolyzes ATP to load the beta clamp onto primed DNA to form the DNA replication pre-initiation complex. DNA polymerase III is a complex, multichain enzyme responsible for most of the replicative synthesis in bacteria. This DNA polymerase also exhibits 3' to 5' exonuclease activity. The gamma complex (gamma(3),delta,delta') is thought to load beta dimers onto DNA by binding ATP which alters the complex's conformation so it can bind beta sliding clamp dimers and open them at one interface. Primed DNA is recognized, ATP is hydrolyzed releasing the gamma complex and closing the beta sliding clamp ring around the primed DNA. The chain is DNA polymerase III subunit delta' (holB) from Escherichia coli (strain K12).